The chain runs to 678 residues: DNA ligase (678 aa).

Residues 35–39, 84–85, and Glu115 each bind NAD(+); these read DEEYD and SL. The N6-AMP-lysine intermediate role is filled by Lys117. 4 residues coordinate NAD(+): Arg138, Glu172, Lys288, and Lys312. Positions 406, 409, 425, and 430 each coordinate Zn(2+). In terms of domain architecture, BRCT spans 589-678; that stretch reads VQSKILSNLT…IKNLRQQKLF (90 aa).

It belongs to the NAD-dependent DNA ligase family. LigA subfamily. Mg(2+) is required as a cofactor. It depends on Mn(2+) as a cofactor.

The enzyme catalyses NAD(+) + (deoxyribonucleotide)n-3'-hydroxyl + 5'-phospho-(deoxyribonucleotide)m = (deoxyribonucleotide)n+m + AMP + beta-nicotinamide D-nucleotide.. Its function is as follows. DNA ligase that catalyzes the formation of phosphodiester linkages between 5'-phosphoryl and 3'-hydroxyl groups in double-stranded DNA using NAD as a coenzyme and as the energy source for the reaction. It is essential for DNA replication and repair of damaged DNA. The protein is DNA ligase of Pseudothermotoga lettingae (strain ATCC BAA-301 / DSM 14385 / NBRC 107922 / TMO) (Thermotoga lettingae).